A 60-amino-acid polypeptide reads, in one-letter code: DNA-binding protein 7c (60 aa).

The segment at 37 to 60 (DNGKTGRGAVSEKDAPKELLEKLK) is disordered. Positions 46–60 (VSEKDAPKELLEKLK) are enriched in basic and acidic residues.

It belongs to the 7 kDa DNA-binding/endoribonuclease P2 family. Monomer.

The protein localises to the cytoplasm. Its function is as follows. Can constrain negative DNA supercoils. May be involved in maintaining the integrity of the genome at high temperature. The sequence is that of DNA-binding protein 7c from Acidianus hospitalis (strain W1).